A 295-amino-acid polypeptide reads, in one-letter code: Tyrosine recombinase XerC (295 aa).

The Core-binding (CB) domain maps to 1 to 84 (MTLEEQFLSY…SLKSFYRFLT (84 aa)). The Tyr recombinase domain maps to 105-289 (KLPEFFYQDE…SMQHLTVEYR (185 aa)). Active-site residues include arginine 145, lysine 169, histidine 241, arginine 244, and histidine 267. The active-site O-(3'-phospho-DNA)-tyrosine intermediate is the tyrosine 276.

It belongs to the 'phage' integrase family. XerC subfamily. In terms of assembly, forms a cyclic heterotetrameric complex composed of two molecules of XerC and two molecules of XerD.

It is found in the cytoplasm. In terms of biological role, site-specific tyrosine recombinase, which acts by catalyzing the cutting and rejoining of the recombining DNA molecules. The XerC-XerD complex is essential to convert dimers of the bacterial chromosome into monomers to permit their segregation at cell division. It also contributes to the segregational stability of plasmids. The polypeptide is Tyrosine recombinase XerC (Lactobacillus delbrueckii subsp. bulgaricus (strain ATCC 11842 / DSM 20081 / BCRC 10696 / JCM 1002 / NBRC 13953 / NCIMB 11778 / NCTC 12712 / WDCM 00102 / Lb 14)).